Here is a 440-residue protein sequence, read N- to C-terminus: Damage-control phosphatase ARMT1 (440 aa).

2 residues coordinate Mn(2+): aspartate 252 and asparagine 253. 252–253 serves as a coordination point for substrate; sequence DN. Residues glutamate 257 and aspartate 290 each contribute to the S-adenosyl-L-methionine site. Residue aspartate 290 coordinates Mn(2+). Substrate is bound by residues 366-370 and lysine 403; that span reads DLNYR. Positions 400–403 match the Subfamily III RTxK motif motif; it reads RTLK.

It belongs to the damage-control phosphatase family. Sugar phosphate phosphatase III subfamily. The cofactor is Mn(2+). Ni(2+) is required as a cofactor. Automethylated.

The enzyme catalyses beta-D-fructose 1-phosphate + H2O = D-fructose + phosphate. The catalysed reaction is beta-D-fructose 6-phosphate = dihydroxyacetone + D-glyceraldehyde 3-phosphate. It catalyses the reaction L-glutamyl-[protein] + S-adenosyl-L-methionine = [protein]-L-glutamate 5-O-methyl ester + S-adenosyl-L-homocysteine. In terms of biological role, metal-dependent phosphatase that shows phosphatase activity against several substrates, including fructose-1-phosphate and fructose-6-phosphate. Its preference for fructose-1-phosphate, a strong glycating agent that causes DNA damage rather than a canonical yeast metabolite, suggests a damage-control function in hexose phosphate metabolism. Has also been shown to have O-methyltransferase activity that methylates glutamate residues of target proteins to form gamma-glutamyl methyl ester residues. Possibly methylates PCNA, suggesting it is involved in the DNA damage response. This is Damage-control phosphatase ARMT1 from Xenopus laevis (African clawed frog).